A 1520-amino-acid chain; its full sequence is Putative lipoprotein AcfD homolog (1520 aa).

Residues 1 to 23 (MNKKFKYKKSLLAAILSATLLAG) form the signal peptide. 2 disordered regions span residues 22–107 (AGCD…GATC) and 226–247 (NAATDKAPSTHTSPVVPVTTPG). A lipid anchor (N-palmitoyl cysteine) is attached at Cys-24. Cys-24 is lipidated: S-diacylglycerol cysteine. Residues 31-42 (SSSDTPPVDSGT) are compositionally biased toward low complexity. Residues 51 to 77 (DPTPNPEPTPEPTPDPEPTPEPIPDPE) are compositionally biased toward pro residues. Over residues 97–107 (GGSQRVTGATC) the composition is skewed to polar residues. Residues 234–247 (STHTSPVVPVTTPG) show a composition bias toward low complexity. Residues 1081–1381 (GNMQSTGLWA…MYAQLKEWAE (301 aa)) enclose the Peptidase M60 domain. A disordered region spans residues 1498 to 1520 (DLPKPEQGPETINQVTEHKMSAE).

It to V.cholerae AcfD (VC_0845).

The protein localises to the cell inner membrane. Its function is as follows. Involved in a type II secretion system (T2SS, formerly general secretion pathway, GSP) for the export of folded proteins across the outer membrane. This Escherichia coli (strain K12) protein is Putative lipoprotein AcfD homolog (yghJ).